The following is a 67-amino-acid chain: U-myrmeciitoxin(01)-Mg4a (67 aa).

An N-terminal signal peptide occupies residues 1-25; it reads MGKVFFFVLMIAIIGSTFLIEEALG.

It belongs to the ant myrmeciitoxin-01 family. As to quaternary structure, homodimer; disulfide-linked. Post-translationally, contains 2 intrachain disulfide bonds (one per chain) and 1 interchain disulfide bond. Expressed by the venom gland.

The protein resides in the secreted. The polypeptide is U-myrmeciitoxin(01)-Mg4a (Myrmecia gulosa (Red bulldog ant)).